The following is a 348-amino-acid chain: 3',5'-cyclic-nucleotide phosphodiesterase (348 aa).

The cofactor is Mn(2+).

It carries out the reaction a nucleoside 3',5'-cyclic phosphate + H2O = a nucleoside 5'-phosphate + H(+). Its function is as follows. Hydrolyzes cAMP to 5'-AMP and cGMP to 5'-GMP. Does not show phosphohydrolase activity toward various phosphatidylcholine and phosphorylated sugars. The chain is 3',5'-cyclic-nucleotide phosphodiesterase from Helicobacter pylori (strain ATCC 700392 / 26695) (Campylobacter pylori).